We begin with the raw amino-acid sequence, 173 residues long: MKLSPGKNAPDVVNVLVEIPQGSNIKYEYDDEEGVIKVDRVLYTSMNYPFNYGFIPGTLEEDGDPLDVLVITNYQLYPGSVIEVRPIGILYMKDEEGEDAKIVAVPKDKTDPSFSNIKDINDLPQATKNKIVHFFEHYKELEPGKYVKISGWGSATEAKNRIQLAIKRVSGGQ.

Substrate contacts are provided by Lys26, Arg40, and Tyr52. Mg(2+) contacts are provided by Asp62, Asp67, and Asp99. A substrate-binding site is contributed by Tyr138.

This sequence belongs to the PPase family. In terms of assembly, homohexamer. Mg(2+) is required as a cofactor.

It localises to the cytoplasm. The catalysed reaction is diphosphate + H2O = 2 phosphate + H(+). Functionally, catalyzes the hydrolysis of inorganic pyrophosphate (PPi) forming two phosphate ions. In Sulfolobus acidocaldarius (strain ATCC 33909 / DSM 639 / JCM 8929 / NBRC 15157 / NCIMB 11770), this protein is Inorganic pyrophosphatase.